Here is a 581-residue protein sequence, read N- to C-terminus: 4-hydroxy-3-methylbut-2-en-1-yl diphosphate synthase (flavodoxin) (581 aa).

The [4Fe-4S] cluster site is built by Cys489, Cys492, Cys523, and Glu530.

Belongs to the IspG family. [4Fe-4S] cluster is required as a cofactor.

It catalyses the reaction (2E)-4-hydroxy-3-methylbut-2-enyl diphosphate + oxidized [flavodoxin] + H2O + 2 H(+) = 2-C-methyl-D-erythritol 2,4-cyclic diphosphate + reduced [flavodoxin]. It functions in the pathway isoprenoid biosynthesis; isopentenyl diphosphate biosynthesis via DXP pathway; isopentenyl diphosphate from 1-deoxy-D-xylulose 5-phosphate: step 5/6. Converts 2C-methyl-D-erythritol 2,4-cyclodiphosphate (ME-2,4cPP) into 1-hydroxy-2-methyl-2-(E)-butenyl 4-diphosphate. The protein is 4-hydroxy-3-methylbut-2-en-1-yl diphosphate synthase (flavodoxin) of Porphyromonas gingivalis (strain ATCC BAA-308 / W83).